A 150-amino-acid polypeptide reads, in one-letter code: Calmodulin-like protein 7 (150 aa).

EF-hand domains follow at residues 1–36, 37–72, 75–110, and 113–148; these read MDPT…LGIY, IPDK…IMDE, EEEE…LGLK, and KTLD…GGFN. Ca(2+) is bound by residues aspartate 14, asparagine 16, aspartate 18, threonine 20, glutamate 25, aspartate 50, asparagine 52, aspartate 54, cysteine 56, glutamate 61, aspartate 88, asparagine 90, aspartate 92, glutamate 99, aspartate 126, aspartate 128, aspartate 130, arginine 132, and glutamate 137.

Belongs to the calmodulin family.

In terms of biological role, potential calcium sensor. This chain is Calmodulin-like protein 7 (CML7), found in Arabidopsis thaliana (Mouse-ear cress).